The chain runs to 315 residues: MRHLLSTKTLAREDAIRLLDVAEDMADVQGREVKKLPALRGKTVVNLFFEDSTRTRISFEAAAKRLSADVITFSAKGSSVSKGESLKDTAQTLAAMGADAVVVRHHSSGAPQTLAASGWIDARIVNAGDGTHEHPTQALLDAFTMRRRLHGRGSRGRDLDGVAVTIVGDILHSRVARSNVWLLRTLGAAVTLVAPPTLLPVEVSGWPAAIGYDLDAALAADPDVVMMLRIQGERMNAAFFPTTREYSRRWGLDDERLARLRADSIVMHPGPMNRGLEISAAAADSPRSTVREQVASGVSVRMAALYLLLSGDREA.

Carbamoyl phosphate is bound by residues R54 and T55. K82 serves as a coordination point for L-aspartate. R104, H134, and Q137 together coordinate carbamoyl phosphate. 2 residues coordinate L-aspartate: R174 and R229. 2 residues coordinate carbamoyl phosphate: G270 and P271.

Belongs to the aspartate/ornithine carbamoyltransferase superfamily. ATCase family. In terms of assembly, heterododecamer (2C3:3R2) of six catalytic PyrB chains organized as two trimers (C3), and six regulatory PyrI chains organized as three dimers (R2).

The catalysed reaction is carbamoyl phosphate + L-aspartate = N-carbamoyl-L-aspartate + phosphate + H(+). Its pathway is pyrimidine metabolism; UMP biosynthesis via de novo pathway; (S)-dihydroorotate from bicarbonate: step 2/3. In terms of biological role, catalyzes the condensation of carbamoyl phosphate and aspartate to form carbamoyl aspartate and inorganic phosphate, the committed step in the de novo pyrimidine nucleotide biosynthesis pathway. In Leifsonia xyli subsp. xyli (strain CTCB07), this protein is Aspartate carbamoyltransferase catalytic subunit.